Here is a 504-residue protein sequence, read N- to C-terminus: D-alanine--D-alanyl carrier protein ligase (504 aa).

An ATP-binding site is contributed by 152–153 (TS). D-alanine is bound at residue aspartate 197. 292–297 (NTYGPT) provides a ligand contact to ATP. A D-alanine-binding site is contributed by valine 301. Residues aspartate 383, 394–397 (YNGR), and lysine 492 contribute to the ATP site. Lysine 492 lines the D-alanine pocket.

It belongs to the ATP-dependent AMP-binding enzyme family. DltA subfamily.

It localises to the cytoplasm. The enzyme catalyses holo-[D-alanyl-carrier protein] + D-alanine + ATP = D-alanyl-[D-alanyl-carrier protein] + AMP + diphosphate. Its pathway is cell wall biogenesis; lipoteichoic acid biosynthesis. Functionally, catalyzes the first step in the D-alanylation of lipoteichoic acid (LTA), the activation of D-alanine and its transfer onto the D-alanyl carrier protein (Dcp) DltC. In an ATP-dependent two-step reaction, forms a high energy D-alanyl-AMP intermediate, followed by transfer of the D-alanyl residue as a thiol ester to the phosphopantheinyl prosthetic group of the Dcp. D-alanylation of LTA plays an important role in modulating the properties of the cell wall in Gram-positive bacteria, influencing the net charge of the cell wall. This Bacillus cereus (strain G9842) protein is D-alanine--D-alanyl carrier protein ligase.